The following is a 119-amino-acid chain: Large ribosomal subunit protein bL19 (119 aa).

The protein belongs to the bacterial ribosomal protein bL19 family.

In terms of biological role, this protein is located at the 30S-50S ribosomal subunit interface and may play a role in the structure and function of the aminoacyl-tRNA binding site. In Photobacterium profundum (strain SS9), this protein is Large ribosomal subunit protein bL19.